The chain runs to 223 residues: Probable chemoreceptor glutamine deamidase CheD (223 aa).

Residues 189 to 223 (QTASAKAHTPPQIERFSAPAKPRFERFTRPSTATS) are disordered.

This sequence belongs to the CheD family.

It carries out the reaction L-glutaminyl-[protein] + H2O = L-glutamyl-[protein] + NH4(+). Its function is as follows. Probably deamidates glutamine residues to glutamate on methyl-accepting chemotaxis receptors (MCPs), playing an important role in chemotaxis. The protein is Probable chemoreceptor glutamine deamidase CheD of Bordetella petrii (strain ATCC BAA-461 / DSM 12804 / CCUG 43448).